A 255-amino-acid chain; its full sequence is MFKIGNLELQSRLLLGTGKFENEDVQTEAIKASETNVLTFAVRRMNLYDKNLPNPLANINLKDFITFPNTASAKTAEEAIRIAEIAKHAGVCDMIKVEVIGDDETLLPDPFETYEACKVLLERGYIVCPYISNDVVLAKRLEDLGVHAVMPLASPIGTGRGINNQLNLSYIIKNSNVPVIVDAGIGSPKDACHAMELGADGILLNTAVSGAKDPVKMAEAMKLGIHAGRLSYEAGRIPVKYTAQASSPTEGLGFL.

Lys-96 (schiff-base intermediate with DXP) is an active-site residue. Residues Gly-157, 183–184 (AG), and 205–206 (NT) each bind 1-deoxy-D-xylulose 5-phosphate.

It belongs to the ThiG family. In terms of assembly, homotetramer. Forms heterodimers with either ThiH or ThiS.

The protein localises to the cytoplasm. The catalysed reaction is [ThiS sulfur-carrier protein]-C-terminal-Gly-aminoethanethioate + 2-iminoacetate + 1-deoxy-D-xylulose 5-phosphate = [ThiS sulfur-carrier protein]-C-terminal Gly-Gly + 2-[(2R,5Z)-2-carboxy-4-methylthiazol-5(2H)-ylidene]ethyl phosphate + 2 H2O + H(+). It functions in the pathway cofactor biosynthesis; thiamine diphosphate biosynthesis. In terms of biological role, catalyzes the rearrangement of 1-deoxy-D-xylulose 5-phosphate (DXP) to produce the thiazole phosphate moiety of thiamine. Sulfur is provided by the thiocarboxylate moiety of the carrier protein ThiS. In vitro, sulfur can be provided by H(2)S. This Staphylococcus haemolyticus (strain JCSC1435) protein is Thiazole synthase.